A 311-amino-acid polypeptide reads, in one-letter code: MPPDGKSDMERIGVFKEMGYISIGDKYTSFIYRPFNDSAYKNKQMLLGGTKSKCGLQTGYFDTQFKRIFEREAFTDPVRIDRQYRILQAKKNIGKAFLPSNGEKTTCGMGTYYGTFGGPIQAMSALQIPRKQNKSAGKNFYTNPPKEGSGYGCPDITLSKMVSYSSDPYDRAKEMLKREITAHKSMLKGGAFRLNLHPNEYFDGNPYKFDKPLPPPKKIEEKKHFAVPFKPSSPSKKAGGMKAGAFDSYPTYSAEPYGTKKTKSVVANNEVKIFHPSPGPKSTPIKSIISLNVNKAVNSTNYNRIPSVMSF.

Belongs to the CFAP96 family.

Its subcellular location is the cytoplasm. The protein localises to the cytoskeleton. The protein resides in the microtubule organizing center. It is found in the centrosome. The sequence is that of Cilia-and flagella-associated protein 96 (cfap96) from Danio rerio (Zebrafish).